The primary structure comprises 221 residues: Deep sea actinoporin Cjtox II (221 aa).

The N-terminal stretch at 1–19 is a signal peptide; it reads MNRLIIVCLVAAMIYSTIA. A propeptide spanning residues 20 to 42 is cleaved from the precursor; it reads LPMKEDISNDERPISVNEEPVKK. Residues S96, V129, S147, P149, Y175, Y179, and Y180 each coordinate phosphocholine. A trp-rich region, which is important for the binding to lipid membrane region spans residues 147 to 162; that stretch reads SVPYDYNWYENWWNIK. Residues 186–188 carry the Cell attachment site, crucial for protein stability motif; sequence KGD.

Belongs to the actinoporin family. Sea anemone subfamily. As to quaternary structure, octamer or nonamer in membranes. Monomer in the soluble state. Expressed in actinopharynx and in gastric filaments. Is not expressed in tentacles.

The protein localises to the secreted. Its subcellular location is the nematocyst. The protein resides in the target cell membrane. In terms of biological role, may be involved in digestion of prey. Pore-forming protein that forms cations-selective hydrophilic pores of around 1 nm and causes cytolysis. Pore formation is a multi-step process that involves specific recognition of membrane sphingomyelin (but neither cholesterol nor phosphatidylcholine) using aromatic rich region and adjacent phosphocholine (POC) binding site, firm binding to the membrane (mainly driven by hydrophobic interactions) accompanied by the transfer of the N-terminal region to the lipid-water interface and finally pore formation after oligomerization of monomers. Shows hemolytic activity on equine erythrocytes. Hemolysis is highly inhibited in presence of sphingomyelin, suggesting that this protein targets sphingomyelin. The protein is Deep sea actinoporin Cjtox II of Cribrinopsis japonica (Deep-sea anemone).